The sequence spans 225 residues: Glutathione S-transferase zeta class (225 aa).

A GST N-terminal domain is found at 10-91 (PKLKLYSYFR…YLEEKYPEHP (82 aa)). Glutathione contacts are provided by residues 20-25 (SSCSFR), Gln-49, Val-63, 75-76 (DS), Gln-115, and 119-121 (NLA). A GST C-terminal domain is found at 96-221 (DIHKKAINYQ…MPDKQPDSTS (126 aa)).

The protein belongs to the GST superfamily. Zeta family.

Its subcellular location is the cytoplasm. The enzyme catalyses RX + glutathione = an S-substituted glutathione + a halide anion + H(+). This chain is Glutathione S-transferase zeta class, found in Euphorbia esula (Leafy spurge).